The chain runs to 248 residues: Probable N-acetylglucosaminyl-phosphatidylinositol de-N-acetylase (248 aa).

The Lumenal segment spans residues 1 to 7 (MIWFWST). A helical transmembrane segment spans residues 8–24 (LLVTAIAVLSTANESSS). The Cytoplasmic portion of the chain corresponds to 25-248 (GQEKLAVESI…MSNNVLKRAT (224 aa)).

The protein belongs to the PIGL family.

It is found in the endoplasmic reticulum membrane. It catalyses the reaction a 6-(N-acetyl-alpha-D-glucosaminyl)-1-(1,2-diacyl-sn-glycero-3-phospho)-1D-myo-inositol + H2O = a 6-(alpha-D-glucosaminyl)-1-(1,2-diacyl-sn-glycero-3-phospho)-1D-myo-inositol + acetate. Its pathway is glycolipid biosynthesis; glycosylphosphatidylinositol-anchor biosynthesis. Its function is as follows. Involved in the second step of GPI biosynthesis. De-N-acetylation of N-acetylglucosaminyl-phosphatidylinositol. This chain is Probable N-acetylglucosaminyl-phosphatidylinositol de-N-acetylase (gpi12), found in Schizosaccharomyces pombe (strain 972 / ATCC 24843) (Fission yeast).